We begin with the raw amino-acid sequence, 250 residues long: 1-(5-phosphoribosyl)-5-[(5-phosphoribosylamino)methylideneamino] imidazole-4-carboxamide isomerase (250 aa).

D7 acts as the Proton acceptor in catalysis. The active-site Proton donor is the D129.

It belongs to the HisA/HisF family.

It is found in the cytoplasm. The enzyme catalyses 1-(5-phospho-beta-D-ribosyl)-5-[(5-phospho-beta-D-ribosylamino)methylideneamino]imidazole-4-carboxamide = 5-[(5-phospho-1-deoxy-D-ribulos-1-ylimino)methylamino]-1-(5-phospho-beta-D-ribosyl)imidazole-4-carboxamide. It functions in the pathway amino-acid biosynthesis; L-histidine biosynthesis; L-histidine from 5-phospho-alpha-D-ribose 1-diphosphate: step 4/9. The protein is 1-(5-phosphoribosyl)-5-[(5-phosphoribosylamino)methylideneamino] imidazole-4-carboxamide isomerase of Shewanella denitrificans (strain OS217 / ATCC BAA-1090 / DSM 15013).